A 274-amino-acid chain; its full sequence is Rhamnulose-1-phosphate aldolase (274 aa).

The active site involves E117. 3 residues coordinate Zn(2+): H141, H143, and H212.

The protein belongs to the aldolase class II family. RhaD subfamily. In terms of assembly, homotetramer. The cofactor is Zn(2+).

The protein localises to the cytoplasm. It catalyses the reaction L-rhamnulose 1-phosphate = (S)-lactaldehyde + dihydroxyacetone phosphate. Its pathway is carbohydrate degradation; L-rhamnose degradation; glycerone phosphate from L-rhamnose: step 3/3. Catalyzes the reversible cleavage of L-rhamnulose-1-phosphate to dihydroxyacetone phosphate (DHAP) and L-lactaldehyde. The protein is Rhamnulose-1-phosphate aldolase of Escherichia coli O7:K1 (strain IAI39 / ExPEC).